The chain runs to 466 residues: Ribulose bisphosphate carboxylase large chain (466 aa).

Lysine 5 is modified (N6,N6,N6-trimethyllysine). Asparagine 114 and threonine 164 together coordinate substrate. Lysine 166 serves as the catalytic Proton acceptor. Lysine 168 is a substrate binding site. 3 residues coordinate Mg(2+): lysine 192, aspartate 194, and glutamate 195. Lysine 192 is modified (N6-carboxylysine). Residue histidine 285 is the Proton acceptor of the active site. The substrate site is built by arginine 286, histidine 318, and serine 370.

The protein belongs to the RuBisCO large chain family. Type I subfamily. In terms of assembly, heterohexadecamer of 8 large chains and 8 small chains; disulfide-linked. The disulfide link is formed within the large subunit homodimers. It depends on Mg(2+) as a cofactor. Post-translationally, the disulfide bond which can form in the large chain dimeric partners within the hexadecamer appears to be associated with oxidative stress and protein turnover.

The protein localises to the plastid. Its subcellular location is the chloroplast. The enzyme catalyses 2 (2R)-3-phosphoglycerate + 2 H(+) = D-ribulose 1,5-bisphosphate + CO2 + H2O. It catalyses the reaction D-ribulose 1,5-bisphosphate + O2 = 2-phosphoglycolate + (2R)-3-phosphoglycerate + 2 H(+). RuBisCO catalyzes two reactions: the carboxylation of D-ribulose 1,5-bisphosphate, the primary event in carbon dioxide fixation, as well as the oxidative fragmentation of the pentose substrate in the photorespiration process. Both reactions occur simultaneously and in competition at the same active site. This chain is Ribulose bisphosphate carboxylase large chain, found in Asarum canadense (Wild ginger).